The chain runs to 268 residues: Tryptophan synthase alpha chain (268 aa).

Active-site proton acceptor residues include Glu-40 and Asp-51.

The protein belongs to the TrpA family. In terms of assembly, tetramer of two alpha and two beta chains.

It catalyses the reaction (1S,2R)-1-C-(indol-3-yl)glycerol 3-phosphate + L-serine = D-glyceraldehyde 3-phosphate + L-tryptophan + H2O. Its pathway is amino-acid biosynthesis; L-tryptophan biosynthesis; L-tryptophan from chorismate: step 5/5. In terms of biological role, the alpha subunit is responsible for the aldol cleavage of indoleglycerol phosphate to indole and glyceraldehyde 3-phosphate. This chain is Tryptophan synthase alpha chain, found in Geobacillus thermodenitrificans (strain NG80-2).